Reading from the N-terminus, the 294-residue chain is Basic endochitinase (294 aa).

Positions 1–24 are cleaved as a signal peptide; it reads MNIKVSLLFILPIFLLLLTSKVKA. Residues 25–294 form the GH18 domain; it reads GDIVVYWGQD…GYSSAIRGAV (270 aa). Intrachain disulfides connect Cys-44-Cys-91 and Cys-74-Cys-81. The active-site Proton donor is the Glu-151. Cys-182 and Cys-211 are oxidised to a cystine.

This sequence belongs to the glycosyl hydrolase 18 family. Chitinase class II subfamily.

The catalysed reaction is Random endo-hydrolysis of N-acetyl-beta-D-glucosaminide (1-&gt;4)-beta-linkages in chitin and chitodextrins.. This protein functions as a defense against chitin containing fungal pathogens. This Nicotiana tabacum (Common tobacco) protein is Basic endochitinase.